Reading from the N-terminus, the 54-residue chain is Photosystem II reaction center protein K (54 aa).

The propeptide occupies 1-17; that stretch reads MSFENFAIITLKENVFA. Residues 33–53 traverse the membrane as a helical segment; sequence LPIIPVLFLLLAFVWQSAVKF.

It belongs to the PsbK family. PSII is composed of 1 copy each of membrane proteins PsbA, PsbB, PsbC, PsbD, PsbE, PsbF, PsbH, PsbI, PsbJ, PsbK, PsbL, PsbM, PsbT, PsbY, PsbZ, Psb30/Ycf12, at least 3 peripheral proteins of the oxygen-evolving complex and a large number of cofactors. It forms dimeric complexes.

Its subcellular location is the plastid. It localises to the chloroplast thylakoid membrane. Its function is as follows. One of the components of the core complex of photosystem II (PSII). PSII is a light-driven water:plastoquinone oxidoreductase that uses light energy to abstract electrons from H(2)O, generating O(2) and a proton gradient subsequently used for ATP formation. It consists of a core antenna complex that captures photons, and an electron transfer chain that converts photonic excitation into a charge separation. The polypeptide is Photosystem II reaction center protein K (Euglena deses).